Consider the following 310-residue polypeptide: Thioredoxin reductase (310 aa).

35-42 (ERGMPGGQ) contacts FAD. Cysteines 134 and 137 form a disulfide. Residue 277–286 (DVRDKGLRQI) coordinates FAD.

This sequence belongs to the class-II pyridine nucleotide-disulfide oxidoreductase family. Homodimer. It depends on FAD as a cofactor.

The protein resides in the cytoplasm. It catalyses the reaction [thioredoxin]-dithiol + NADP(+) = [thioredoxin]-disulfide + NADPH + H(+). This is Thioredoxin reductase (trxB) from Staphylococcus epidermidis (strain ATCC 35984 / DSM 28319 / BCRC 17069 / CCUG 31568 / BM 3577 / RP62A).